Consider the following 175-residue polypeptide: Large ribosomal subunit protein uL6 (175 aa).

Belongs to the universal ribosomal protein uL6 family. Part of the 50S ribosomal subunit.

Its function is as follows. This protein binds to the 23S rRNA, and is important in its secondary structure. It is located near the subunit interface in the base of the L7/L12 stalk, and near the tRNA binding site of the peptidyltransferase center. This chain is Large ribosomal subunit protein uL6, found in Xanthomonas oryzae pv. oryzae (strain MAFF 311018).